The sequence spans 285 residues: Phosphatidylglycerol--prolipoprotein diacylglyceryl transferase (285 aa).

The next 5 membrane-spanning stretches (helical) occupy residues 17 to 37 (ALGL…GLTL), 43 to 63 (WYAL…LFLL), 78 to 98 (LVFW…VLFY), 113 to 133 (WEGG…IWWV), and 139 to 159 (LSWL…LFLG). An a 1,2-diacyl-sn-glycero-3-phospho-(1'-sn-glycerol)-binding site is contributed by R160. 3 consecutive transmembrane segments (helical) span residues 195–215 (LYEA…QFFA), 223–243 (GKLA…VEWF), and 256–276 (GLTM…WLII).

The protein belongs to the Lgt family.

The protein localises to the cell inner membrane. The enzyme catalyses L-cysteinyl-[prolipoprotein] + a 1,2-diacyl-sn-glycero-3-phospho-(1'-sn-glycerol) = an S-1,2-diacyl-sn-glyceryl-L-cysteinyl-[prolipoprotein] + sn-glycerol 1-phosphate + H(+). The protein operates within protein modification; lipoprotein biosynthesis (diacylglyceryl transfer). Catalyzes the transfer of the diacylglyceryl group from phosphatidylglycerol to the sulfhydryl group of the N-terminal cysteine of a prolipoprotein, the first step in the formation of mature lipoproteins. The sequence is that of Phosphatidylglycerol--prolipoprotein diacylglyceryl transferase from Zymomonas mobilis subsp. mobilis (strain ATCC 31821 / ZM4 / CP4).